Here is a 119-residue protein sequence, read N- to C-terminus: Large ribosomal subunit protein bL20c (119 aa).

This sequence belongs to the bacterial ribosomal protein bL20 family.

Its subcellular location is the plastid. The protein localises to the chloroplast. Binds directly to 23S ribosomal RNA and is necessary for the in vitro assembly process of the 50S ribosomal subunit. It is not involved in the protein synthesizing functions of that subunit. The chain is Large ribosomal subunit protein bL20c (rpl20) from Zea mays (Maize).